A 63-amino-acid polypeptide reads, in one-letter code: Small ribosomal subunit protein eS17 (63 aa).

This sequence belongs to the eukaryotic ribosomal protein eS17 family.

This is Small ribosomal subunit protein eS17 from Methanococcus maripaludis (strain C7 / ATCC BAA-1331).